Consider the following 863-residue polypeptide: Leucine--tRNA ligase (863 aa).

A 'HIGH' region motif is present at residues 42–52 (PYPSGRLHMGH). The 'KMSKS' region motif lies at 622 to 626 (KMSKS). Position 625 (K625) interacts with ATP.

The protein belongs to the class-I aminoacyl-tRNA synthetase family.

Its subcellular location is the cytoplasm. The catalysed reaction is tRNA(Leu) + L-leucine + ATP = L-leucyl-tRNA(Leu) + AMP + diphosphate. This Shewanella loihica (strain ATCC BAA-1088 / PV-4) protein is Leucine--tRNA ligase.